The chain runs to 128 residues: Fluoride-specific ion channel FluC 1 (128 aa).

Helical transmembrane passes span 10 to 30 (VAFF…AFSF), 32 to 52 (GTVI…YFFL), 59 to 79 (AWLT…FSSF), and 93 to 113 (FGAL…AWAG). Na(+) is bound by residues Gly-71 and Thr-74.

It belongs to the fluoride channel Fluc/FEX (TC 1.A.43) family.

It is found in the cell membrane. The catalysed reaction is fluoride(in) = fluoride(out). With respect to regulation, na(+) is not transported, but it plays an essential structural role and its presence is essential for fluoride channel function. In terms of biological role, fluoride-specific ion channel. Important for reducing fluoride concentration in the cell, thus reducing its toxicity. In Lactobacillus delbrueckii subsp. bulgaricus (strain ATCC 11842 / DSM 20081 / BCRC 10696 / JCM 1002 / NBRC 13953 / NCIMB 11778 / NCTC 12712 / WDCM 00102 / Lb 14), this protein is Fluoride-specific ion channel FluC 1.